We begin with the raw amino-acid sequence, 139 residues long: D-ribose pyranase (139 aa).

Histidine 20 acts as the Proton donor in catalysis. Residues aspartate 28, histidine 106, and 128–130 (YAN) contribute to the substrate site.

Belongs to the RbsD / FucU family. RbsD subfamily. Homodecamer.

It is found in the cytoplasm. It catalyses the reaction beta-D-ribopyranose = beta-D-ribofuranose. The protein operates within carbohydrate metabolism; D-ribose degradation; D-ribose 5-phosphate from beta-D-ribopyranose: step 1/2. In terms of biological role, catalyzes the interconversion of beta-pyran and beta-furan forms of D-ribose. In Aeromonas salmonicida (strain A449), this protein is D-ribose pyranase.